Reading from the N-terminus, the 417-residue chain is Serine hydroxymethyltransferase (417 aa).

(6S)-5,6,7,8-tetrahydrofolate-binding positions include Leu-121 and 125 to 127; that span reads GHL. Lys-229 is modified (N6-(pyridoxal phosphate)lysine). 355 to 357 contributes to the (6S)-5,6,7,8-tetrahydrofolate binding site; it reads SPF.

This sequence belongs to the SHMT family. Homodimer. Pyridoxal 5'-phosphate serves as cofactor.

Its subcellular location is the cytoplasm. The enzyme catalyses (6R)-5,10-methylene-5,6,7,8-tetrahydrofolate + glycine + H2O = (6S)-5,6,7,8-tetrahydrofolate + L-serine. It functions in the pathway one-carbon metabolism; tetrahydrofolate interconversion. Its pathway is amino-acid biosynthesis; glycine biosynthesis; glycine from L-serine: step 1/1. Catalyzes the reversible interconversion of serine and glycine with tetrahydrofolate (THF) serving as the one-carbon carrier. This reaction serves as the major source of one-carbon groups required for the biosynthesis of purines, thymidylate, methionine, and other important biomolecules. Also exhibits THF-independent aldolase activity toward beta-hydroxyamino acids, producing glycine and aldehydes, via a retro-aldol mechanism. The chain is Serine hydroxymethyltransferase from Xylella fastidiosa (strain M23).